A 241-amino-acid polypeptide reads, in one-letter code: Lipoprotein MxiJ (241 aa).

The first 17 residues, 1–17 (MIRYKGFILFLLLMLIG), serve as a signal peptide directing secretion. C18 carries the N-palmitoyl cysteine lipid modification. C18 carries S-diacylglycerol cysteine lipidation.

This sequence belongs to the YscJ lipoprotein family.

It is found in the cell outer membrane. Functionally, involved in the secretion of the Ipa antigens. The chain is Lipoprotein MxiJ (mxiJ) from Shigella sonnei.